A 248-amino-acid chain; its full sequence is Phycocyanobilin:ferredoxin oxidoreductase (248 aa).

Belongs to the HY2 family.

The catalysed reaction is (2R,3Z)-phycocyanobilin + 4 oxidized [2Fe-2S]-[ferredoxin] = biliverdin IXalpha + 4 reduced [2Fe-2S]-[ferredoxin] + 4 H(+). Catalyzes the four-electron reduction of biliverdin IX-alpha (2-electron reduction at both the A and D rings); the reaction proceeds via an isolatable 2-electron intermediate, 181,182-dihydrobiliverdin. The sequence is that of Phycocyanobilin:ferredoxin oxidoreductase (pcyA) from Synechococcus elongatus (strain ATCC 33912 / PCC 7942 / FACHB-805) (Anacystis nidulans R2).